The chain runs to 460 residues: Ribosomal protein uS12 methylthiotransferase RimO (460 aa).

The MTTase N-terminal domain maps to 9 to 119 (PKVGFVSLGC…VMEAVHAALP (111 aa)). The [4Fe-4S] cluster site is built by Cys18, Cys54, Cys83, Cys150, Cys154, and Cys157. The 239-residue stretch at 136 to 374 (LTPRHYAYLK…AKQAEISALR (239 aa)) folds into the Radical SAM core domain. In terms of domain architecture, TRAM spans 376–444 (EAKIGSVQQC…EHDLFGDALP (69 aa)).

It belongs to the methylthiotransferase family. RimO subfamily. [4Fe-4S] cluster serves as cofactor.

The protein localises to the cytoplasm. It catalyses the reaction L-aspartate(89)-[ribosomal protein uS12]-hydrogen + (sulfur carrier)-SH + AH2 + 2 S-adenosyl-L-methionine = 3-methylsulfanyl-L-aspartate(89)-[ribosomal protein uS12]-hydrogen + (sulfur carrier)-H + 5'-deoxyadenosine + L-methionine + A + S-adenosyl-L-homocysteine + 2 H(+). Catalyzes the methylthiolation of an aspartic acid residue of ribosomal protein uS12. This chain is Ribosomal protein uS12 methylthiotransferase RimO, found in Xanthomonas oryzae pv. oryzae (strain PXO99A).